The primary structure comprises 48 residues: TDCGGKTCSEAQVCKDGKCVCVIGQCRKYCPNGFKKDENGCTFPCTCA.

Intrachain disulfides connect Cys3/Cys14, Cys8/Cys19, Cys21/Cys41, Cys26/Cys45, and Cys30/Cys47. The region spanning 19–47 is the Antistasin-like domain; sequence CVCVIGQCRKYCPNGFKKDENGCTFPCTC.

Belongs to the protease inhibitor I15 (antistasin) family.

The protein localises to the secreted. Its function is as follows. Inhibits plasma and tissue kallikrein, and trypsin. May be involved in leech hematophagia. This Hirudo nipponia (Korean blood-sucking leech) protein is Piguamerin.